A 55-amino-acid chain; its full sequence is Methylmalonyl-CoA decarboxylase subunit epsilon (55 aa).

The methylmalonyl-CoA decarboxylase is composed of five subunits: the carboxyltransferase alpha subunit (MmdA), the tunnel beta subunit (MmdB), the biotin-containing gamma subunit (MmdC), and the delta (MmdD) and epsilon (MmdE) subunits.

The protein localises to the cell membrane. The enzyme catalyses (S)-methylmalonyl-CoA + Na(+)(in) + H(+)(out) = propanoyl-CoA + Na(+)(out) + CO2. Completely inhibited by avidin. Subunit of the sodium ion pump methylmalonyl-CoA decarboxylase, which converts the chemical energy of a decarboxylation reaction into an electrochemical gradient of Na(+) ions across the cytoplasmic membrane, thereby creating a sodium ion motive force that is used for ATP synthesis. The epsilon subunit seems not important for the catalysis of either decarboxylation or Na(+) transport, but it improves binding of the alpha subunit and plays an important role in stabilizing the methylmalonyl-CoA-decarboxylase enzyme complex. Can also convert malonyl-CoA into acetyl-CoA. This is Methylmalonyl-CoA decarboxylase subunit epsilon from Veillonella parvula (Staphylococcus parvulus).